The primary structure comprises 289 residues: Urease accessory protein UreD (289 aa).

It belongs to the UreD family. In terms of assembly, ureD, UreF and UreG form a complex that acts as a GTP-hydrolysis-dependent molecular chaperone, activating the urease apoprotein by helping to assemble the nickel containing metallocenter of UreC. The UreE protein probably delivers the nickel.

It is found in the cytoplasm. Required for maturation of urease via the functional incorporation of the urease nickel metallocenter. This Magnetococcus marinus (strain ATCC BAA-1437 / JCM 17883 / MC-1) protein is Urease accessory protein UreD.